Consider the following 233-residue polypeptide: CDP-diacylglycerol--glycerol-3-phosphate 3-phosphatidyltransferase 2 (233 aa).

Positions 1 to 23 are disordered; that stretch reads MGEEDTATVDQNSFGGGKDSLLR. 5 consecutive transmembrane segments (helical) span residues 40–60, 71–91, 100–120, 125–145, and 201–221; these read VITL…ILVA, TATT…GYIA, FGAF…LILL, MVAV…IAII, and LPSG…SLVV.

This sequence belongs to the CDP-alcohol phosphatidyltransferase class-I family. Mn(2+) serves as cofactor.

The protein resides in the microsome membrane. The protein localises to the endoplasmic reticulum membrane. It carries out the reaction a CDP-1,2-diacyl-sn-glycerol + sn-glycerol 3-phosphate = a 1,2-diacyl-sn-glycero-3-phospho-(1'-sn-glycero-3'-phosphate) + CMP + H(+). Its pathway is phospholipid metabolism; phosphatidylglycerol biosynthesis; phosphatidylglycerol from CDP-diacylglycerol: step 1/2. Catalyzes the committed step to the synthesis of the acidic phospholipids, including phosphatidylglycerol (PG). Together with PGPS1, required for the proper embryo development by providing PG accurate levels. This is CDP-diacylglycerol--glycerol-3-phosphate 3-phosphatidyltransferase 2 from Arabidopsis thaliana (Mouse-ear cress).